The following is a 136-amino-acid chain: Mitochondrial pyruvate carrier 1-like protein (136 aa).

Over 2-19 (ARMAVLWRKMRDNFQSKE) the chain is Mitochondrial matrix. Residues 20 to 42 (FREYVSSTHFWGPAFSWGLPLAA) form a helical membrane-spanning segment. Residues 43-51 (FKDMKASPE) are Mother cell cytoplasmic-facing. Residues 52–74 (IISGRMTTALILYSAIFMRFAYR) traverse the membrane as a helical segment. Residues 75–136 (VQPRNLLLMA…PGSQPPKQAS (62 aa)) lie on the Mitochondrial matrix side of the membrane. The tract at residues 111–136 (EAKARDPPATAAAATSPGSQPPKQAS) is disordered. Residues 117 to 136 (PPATAAAATSPGSQPPKQAS) are compositionally biased toward low complexity.

Belongs to the mitochondrial pyruvate carrier (MPC) (TC 2.A.105) family.

Its subcellular location is the mitochondrion inner membrane. The catalysed reaction is pyruvate(out) + H(+)(out) = pyruvate(in) + H(+)(in). Functionally, mediates the uptake of pyruvate into mitochondria. This is Mitochondrial pyruvate carrier 1-like protein (MPC1L) from Homo sapiens (Human).